A 245-amino-acid chain; its full sequence is Acetylglutamate kinase (245 aa).

Residues 41–42 (GG), Arg63, and Asn156 each bind substrate.

It belongs to the acetylglutamate kinase family. ArgB subfamily.

The protein resides in the cytoplasm. The catalysed reaction is N-acetyl-L-glutamate + ATP = N-acetyl-L-glutamyl 5-phosphate + ADP. It participates in amino-acid biosynthesis; L-arginine biosynthesis; N(2)-acetyl-L-ornithine from L-glutamate: step 2/4. In terms of biological role, catalyzes the ATP-dependent phosphorylation of N-acetyl-L-glutamate. The polypeptide is Acetylglutamate kinase (Streptococcus sanguinis (strain SK36)).